The following is a 321-amino-acid chain: Photosystem II assembly factor Ycf39 (321 aa).

The protein belongs to the NmrA-type oxidoreductase family. Ycf39 subfamily.

The protein resides in the plastid. It localises to the cyanelle. Involved in assembly of photosystem II. The sequence is that of Photosystem II assembly factor Ycf39 (ycf39) from Cyanophora paradoxa.